A 653-amino-acid chain; its full sequence is J protein JJJ2 (653 aa).

A J domain is found at T14 to L78. Disordered stretches follow at residues D85–E308 and V490–L512. 2 stretches are compositionally biased toward polar residues: residues N161–S171 and A187–V200. Positions S213–S241 are enriched in low complexity. Residues P298–E308 show a composition bias toward polar residues.

The protein localises to the cytoplasm. The protein resides in the nucleus. The protein is J protein JJJ2 (JJJ2) of Kluyveromyces lactis (strain ATCC 8585 / CBS 2359 / DSM 70799 / NBRC 1267 / NRRL Y-1140 / WM37) (Yeast).